The sequence spans 281 residues: Aspartate/glutamate leucyltransferase (281 aa).

This sequence belongs to the R-transferase family. Bpt subfamily.

The protein resides in the cytoplasm. The catalysed reaction is N-terminal L-glutamyl-[protein] + L-leucyl-tRNA(Leu) = N-terminal L-leucyl-L-glutamyl-[protein] + tRNA(Leu) + H(+). It carries out the reaction N-terminal L-aspartyl-[protein] + L-leucyl-tRNA(Leu) = N-terminal L-leucyl-L-aspartyl-[protein] + tRNA(Leu) + H(+). Its function is as follows. Functions in the N-end rule pathway of protein degradation where it conjugates Leu from its aminoacyl-tRNA to the N-termini of proteins containing an N-terminal aspartate or glutamate. The chain is Aspartate/glutamate leucyltransferase from Paracoccus denitrificans (strain Pd 1222).